The sequence spans 388 residues: Splicing factor 3B subunit 4 (388 aa).

RRM domains are found at residues 13–91 (ATIY…KASA) and 100–179 (ANIF…YAFK). The tract at residues 244–388 (QPPPLMGMAQ…GMIPPPPPPS (145 aa)) is disordered. 3 stretches are compositionally biased toward pro residues: residues 261–325 (PPVP…PSRF), 333–355 (MPPP…PPRY), and 362–388 (MYPP…PPPS).

It belongs to the SF3B4 family.

The protein localises to the nucleus. Subunit of the splicing factor SF3B required for 'A' complex assembly formed by the stable binding of U2 snRNP to the branchpoint sequence (BPS) in pre-mRNA. Sequence independent binding of SF3A/SF3B complex upstream of the branch site is essential, it may anchor U2 snRNP to the pre-mRNA. May also be involved in the assembly of the 'E' complex. SF3B4 has been found in complex 'B' and 'C' as well. Belongs also to the minor U12-dependent spliceosome, which is involved in the splicing of rare class of nuclear pre-mRNA intron. The protein is Splicing factor 3B subunit 4 (sap-49) of Caenorhabditis elegans.